A 240-amino-acid chain; its full sequence is Acyl-protein thioesterase 1 (240 aa).

Catalysis depends on charge relay system residues S129, D183, and H219.

It belongs to the AB hydrolase superfamily. AB hydrolase 2 family.

It localises to the cytoplasm. The protein localises to the nucleus. The enzyme catalyses S-hexadecanoyl-L-cysteinyl-[protein] + H2O = L-cysteinyl-[protein] + hexadecanoate + H(+). In terms of biological role, hydrolyzes fatty acids from S-acylated cysteine residues in proteins with a strong preference for palmitoylated G-alpha proteins over other acyl substrates. Mediates the deacylation of G-alpha proteins such as GPA1 in vivo, but has weak or no activity toward palmitoylated Ras proteins. Has weak lysophospholipase activity in vitro; however such activity may not exist in vivo. This is Acyl-protein thioesterase 1 from Mycosarcoma maydis (Corn smut fungus).